The following is a 595-amino-acid chain: Proline--tRNA ligase (595 aa).

This sequence belongs to the class-II aminoacyl-tRNA synthetase family. ProS type 1 subfamily. In terms of assembly, homodimer.

The protein localises to the cytoplasm. It catalyses the reaction tRNA(Pro) + L-proline + ATP = L-prolyl-tRNA(Pro) + AMP + diphosphate. Catalyzes the attachment of proline to tRNA(Pro) in a two-step reaction: proline is first activated by ATP to form Pro-AMP and then transferred to the acceptor end of tRNA(Pro). As ProRS can inadvertently accommodate and process non-cognate amino acids such as alanine and cysteine, to avoid such errors it has two additional distinct editing activities against alanine. One activity is designated as 'pretransfer' editing and involves the tRNA(Pro)-independent hydrolysis of activated Ala-AMP. The other activity is designated 'posttransfer' editing and involves deacylation of mischarged Ala-tRNA(Pro). The misacylated Cys-tRNA(Pro) is not edited by ProRS. The protein is Proline--tRNA ligase of Treponema denticola (strain ATCC 35405 / DSM 14222 / CIP 103919 / JCM 8153 / KCTC 15104).